The primary structure comprises 366 residues: Heat-inducible transcription repressor HrcA (366 aa).

Residues 298–309 (SSGYGQSSTPSA) are compositionally biased toward polar residues. Residues 298–318 (SSGYGQSSTPSANVEHEEYDT) form a disordered region.

The protein belongs to the HrcA family.

Negative regulator of class I heat shock genes (grpE-dnaK-dnaJ and groELS operons). Prevents heat-shock induction of these operons. The chain is Heat-inducible transcription repressor HrcA from Bifidobacterium animalis subsp. lactis (strain AD011).